Here is a 256-residue protein sequence, read N- to C-terminus: uncharacterized protein (256 aa).

2 helical membrane passes run 181–201 and 231–251; these read CCII…ASMV and GIAV…GLIA.

The protein resides in the cell membrane. This is an uncharacterized protein from Methanocaldococcus jannaschii (strain ATCC 43067 / DSM 2661 / JAL-1 / JCM 10045 / NBRC 100440) (Methanococcus jannaschii).